The chain runs to 207 residues: ATP-dependent Clp protease proteolytic subunit (207 aa).

The active-site Nucleophile is the Ser111. His136 is a catalytic residue.

The protein belongs to the peptidase S14 family. As to quaternary structure, fourteen ClpP subunits assemble into 2 heptameric rings which stack back to back to give a disk-like structure with a central cavity, resembling the structure of eukaryotic proteasomes.

The protein localises to the cytoplasm. The enzyme catalyses Hydrolysis of proteins to small peptides in the presence of ATP and magnesium. alpha-casein is the usual test substrate. In the absence of ATP, only oligopeptides shorter than five residues are hydrolyzed (such as succinyl-Leu-Tyr-|-NHMec, and Leu-Tyr-Leu-|-Tyr-Trp, in which cleavage of the -Tyr-|-Leu- and -Tyr-|-Trp bonds also occurs).. Functionally, cleaves peptides in various proteins in a process that requires ATP hydrolysis. Has a chymotrypsin-like activity. Plays a major role in the degradation of misfolded proteins. In Aeromonas salmonicida (strain A449), this protein is ATP-dependent Clp protease proteolytic subunit.